The chain runs to 493 residues: Ribosomal protein uS12 methylthiotransferase RimO (493 aa).

The MTTase N-terminal domain occupies 5–121 (RTVALVTLGC…ISDRLQTILN (117 aa)). Residues Cys-14, Cys-50, and Cys-84 each contribute to the [4Fe-4S] cluster site. Positions 153–177 (LPGHGPTDLPEGVAPASGPRAPLRR) are disordered. The Radical SAM core domain occupies 179 to 410 (LDGSPVASVK…RLAEELVSQR (232 aa)). Residues Cys-193, Cys-197, and Cys-200 each coordinate [4Fe-4S] cluster. The TRAM domain occupies 412–482 (DERVGATVRV…GVDLVAEPLL (71 aa)).

It belongs to the methylthiotransferase family. RimO subfamily. Requires [4Fe-4S] cluster as cofactor.

The protein resides in the cytoplasm. The catalysed reaction is L-aspartate(89)-[ribosomal protein uS12]-hydrogen + (sulfur carrier)-SH + AH2 + 2 S-adenosyl-L-methionine = 3-methylsulfanyl-L-aspartate(89)-[ribosomal protein uS12]-hydrogen + (sulfur carrier)-H + 5'-deoxyadenosine + L-methionine + A + S-adenosyl-L-homocysteine + 2 H(+). Functionally, catalyzes the methylthiolation of an aspartic acid residue of ribosomal protein uS12. The chain is Ribosomal protein uS12 methylthiotransferase RimO from Streptomyces coelicolor (strain ATCC BAA-471 / A3(2) / M145).